The following is a 521-amino-acid chain: Cytochrome P450 monooxygenase 105 (521 aa).

The chain crosses the membrane as a helical span at residues 12–32; it reads GVASPATLAVAAVTFLTALVL. Residues asparagine 218, asparagine 274, and asparagine 317 are each glycosylated (N-linked (GlcNAc...) asparagine). Cysteine 449 provides a ligand contact to heme.

It belongs to the cytochrome P450 family. It depends on heme as a cofactor.

Its subcellular location is the membrane. Its pathway is secondary metabolite biosynthesis. Cytochrome P450 monooxygenase that is able to use anthracene, carbazole, pyrene, phenanthrene and trans-stilbene as substrates for oxidation. These multifunctional properties against a series of polycyclic aromatic hydrocarbons (PAHs) suggest that CYP105 would play important roles, at least in part, in fungal metabolic systems involved in xenobiotic detoxification. This Postia placenta (strain ATCC 44394 / Madison 698-R) (Brown rot fungus) protein is Cytochrome P450 monooxygenase 105.